The following is a 308-amino-acid chain: 2-methylisocitrate lyase (308 aa).

Ser-54–Gly-56 provides a ligand contact to substrate. Asp-94 and Asp-96 together coordinate Mg(2+). Substrate-binding positions include Cys-131–Gly-132, Arg-166, Glu-196, Asn-224–Thr-226, Arg-255, and Arg-284.

It belongs to the isocitrate lyase/PEP mutase superfamily. Methylisocitrate lyase family. As to quaternary structure, homotetramer; dimer of dimers. Mg(2+) serves as cofactor.

The enzyme catalyses (2S,3R)-3-hydroxybutane-1,2,3-tricarboxylate = pyruvate + succinate. It participates in organic acid metabolism; propanoate degradation. Involved in the catabolism of short chain fatty acids (SCFA) via the 2-methylcitrate cycle I (propionate degradation route). Catalyzes the thermodynamically favored C-C bond cleavage reaction of (2R,3S)-2-methylisocitrate to yield pyruvate and succinate via an alpha-carboxy-carbanion intermediate. This chain is 2-methylisocitrate lyase, found in Vibrio cholerae serotype O1 (strain ATCC 39315 / El Tor Inaba N16961).